Consider the following 760-residue polypeptide: Semaphorin-4A (760 aa).

The first 32 residues, Met-1 to Gly-32, serve as a signal peptide directing secretion. The Extracellular portion of the chain corresponds to Thr-33–His-682. The 459-residue stretch at Gln-36–Arg-494 folds into the Sema domain. A disulfide bridge connects residues Cys-113 and Cys-124. N-linked (GlcNAc...) asparagine glycosylation is found at Asn-120 and Asn-135. 3 disulfides stabilise this stretch: Cys-142–Cys-151, Cys-269–Cys-379, and Cys-293–Cys-339. Asn-496 carries N-linked (GlcNAc...) asparagine glycosylation. A PSI domain is found at Asn-496–Thr-547. Disulfide bonds link Cys-497-Cys-514, Cys-506-Cys-523, and Cys-579-Cys-623. One can recognise an Ig-like C2-type domain in the interval Asn-572 to Tyr-630. Asn-606 carries an N-linked (GlcNAc...) asparagine glycan. The helical transmembrane segment at Phe-683–Ala-703 threads the bilayer. Residues Ser-704 to Ala-760 are Cytoplasmic-facing. The interval Met-720 to Ala-760 is disordered. Positions Pro-723 to Ser-744 are enriched in basic and acidic residues.

It belongs to the semaphorin family. In terms of assembly, interacts with PLXNB1, PLXNB2 and PLXNB3. Interacts with PLXND1. Interacts with TIMD2. In terms of tissue distribution, expressed in neurons and glia in the developing hippocampus.

It is found in the cell membrane. Cell surface receptor for PLXNB1, PLXNB2, PLXNB3 and PLXND1 that plays an important role in cell-cell signaling. Regulates glutamatergic and GABAergic synapse development. Promotes the development of inhibitory synapses in a PLXNB1-dependent manner and promotes the development of excitatory synapses in a PLXNB2-dependent manner. Plays a role in priming antigen-specific T-cells, promotes differentiation of Th1 T-helper cells, and thereby contributes to adaptive immunity. Promotes phosphorylation of TIMD2. Inhibits angiogenesis. Promotes axon growth cone collapse. Inhibits axonal extension by providing local signals to specify territories inaccessible for growing axons. The sequence is that of Semaphorin-4A (Sema4a) from Mus musculus (Mouse).